The sequence spans 307 residues: Ribonuclease Z (307 aa).

Zn(2+) is bound by residues H63, H65, D67, H68, H140, D211, and H269. The active-site Proton acceptor is the D67.

Belongs to the RNase Z family. In terms of assembly, homodimer. It depends on Zn(2+) as a cofactor.

The enzyme catalyses Endonucleolytic cleavage of RNA, removing extra 3' nucleotides from tRNA precursor, generating 3' termini of tRNAs. A 3'-hydroxy group is left at the tRNA terminus and a 5'-phosphoryl group is left at the trailer molecule.. Its function is as follows. Zinc phosphodiesterase, which displays some tRNA 3'-processing endonuclease activity. Probably involved in tRNA maturation, by removing a 3'-trailer from precursor tRNA. The protein is Ribonuclease Z of Bacillus subtilis (strain 168).